The primary structure comprises 58 residues: UPF0434 protein NT01EI_2448 (58 aa).

The protein belongs to the UPF0434 family.

This Edwardsiella ictaluri (strain 93-146) protein is UPF0434 protein NT01EI_2448.